Here is a 615-residue protein sequence, read N- to C-terminus: Ectoine/glycine betaine/proline transporter EctP (615 aa).

Helical transmembrane passes span 24 to 44, 62 to 82, 102 to 122, 156 to 176, 207 to 227, 240 to 260, 275 to 295, 329 to 349, 360 to 380, 417 to 437, 463 to 483, and 489 to 509; these read FIFS…IALG, LGWM…GIFA, IVWF…FWGV, FGIH…YFIY, LAIV…VLQI, VSWV…ISVA, IAMA…LTLL, WTVF…MFVA, FIGG…SIFG, LTGI…ITSI, WACT…SSGI, and VVII…FSLL. Disordered stretches follow at residues 524 to 562 and 589 to 615; these read TRQW…LEHD and PEEA…EYDI. 2 stretches are compositionally biased toward basic and acidic residues: residues 526 to 540 and 600 to 615; these read QWEK…EEHS and KIVE…EYDI.

Belongs to the BCCT transporter (TC 2.A.15) family.

Its subcellular location is the cell membrane. Functionally, involved in the uptake of osmoprotectants. Can transport ectoine, proline and glycine betaine. Na(+) is probably the coupling ion. This chain is Ectoine/glycine betaine/proline transporter EctP, found in Corynebacterium glutamicum (strain ATCC 13032 / DSM 20300 / JCM 1318 / BCRC 11384 / CCUG 27702 / LMG 3730 / NBRC 12168 / NCIMB 10025 / NRRL B-2784 / 534).